The primary structure comprises 253 residues: DNA polymerase sliding clamp 2 (253 aa).

Belongs to the PCNA family. As to quaternary structure, homotrimer. The subunits circularize to form a toroid; DNA passes through its center. Replication factor C (RFC) is required to load the toroid on the DNA. Interacts with TIP.

Inhibited by interaction with the PCNA inhibitor TIP. Functionally, sliding clamp subunit that acts as a moving platform for DNA processing. Responsible for tethering the catalytic subunit of DNA polymerase and other proteins to DNA during high-speed replication. This Thermococcus kodakarensis (strain ATCC BAA-918 / JCM 12380 / KOD1) (Pyrococcus kodakaraensis (strain KOD1)) protein is DNA polymerase sliding clamp 2.